A 762-amino-acid polypeptide reads, in one-letter code: Cellulose synthase-like protein H2 (762 aa).

Low complexity predominate over residues 1-15 (MAVVAAAAATGSTTR). The interval 1–39 (MAVVAAAAATGSTTRSGGGGGEGTRSGRKKPPPPPLQER) is disordered. 2 consecutive transmembrane segments (helical) span residues 47–67 (AWAW…LLAL) and 81–101 (GVWR…ALNV). Active-site residues include Asp-180 and Asp-470. The next 6 membrane-spanning stretches (helical) occupy residues 541–561 (LAYL…CYGL), 582–602 (FSVP…EYMA), 619–639 (IISV…SLGL), 673–693 (LPVF…VTVG), 708–728 (APGI…FPFV), and 739–759 (GIPW…VTFC).

The protein belongs to the glycosyltransferase 2 family. Plant cellulose synthase-like H subfamily.

Its subcellular location is the golgi apparatus membrane. Thought to be a Golgi-localized beta-glycan synthase that polymerize the backbones of noncellulosic polysaccharides (hemicelluloses) of plant cell wall. The protein is Cellulose synthase-like protein H2 (CSLH2) of Oryza sativa subsp. japonica (Rice).